The primary structure comprises 445 residues: tRNA modification GTPase MnmE (445 aa).

3 residues coordinate (6S)-5-formyl-5,6,7,8-tetrahydrofolate: arginine 24, glutamate 81, and lysine 121. The TrmE-type G domain maps to 218–369 (GLTVVIAGPP…LLEALVGFAR (152 aa)). Residues 228-233 (NAGKST), 247-253 (SPHAGTT), 272-275 (DTAG), and 350-352 (SAR) each bind GTP. Serine 232 and threonine 253 together coordinate Mg(2+). Residue lysine 445 participates in (6S)-5-formyl-5,6,7,8-tetrahydrofolate binding.

The protein belongs to the TRAFAC class TrmE-Era-EngA-EngB-Septin-like GTPase superfamily. TrmE GTPase family. Homodimer. Heterotetramer of two MnmE and two MnmG subunits. It depends on K(+) as a cofactor.

It localises to the cytoplasm. Exhibits a very high intrinsic GTPase hydrolysis rate. Involved in the addition of a carboxymethylaminomethyl (cmnm) group at the wobble position (U34) of certain tRNAs, forming tRNA-cmnm(5)s(2)U34. The polypeptide is tRNA modification GTPase MnmE (Bradyrhizobium sp. (strain BTAi1 / ATCC BAA-1182)).